Reading from the N-terminus, the 513-residue chain is Probable metalloreductase AIM14 (513 aa).

A run of 7 helical transmembrane segments spans residues 22-42 (GYII…AHFL), 66-86 (PFWV…FTNV), 103-123 (LAFC…LLGQ), 138-158 (LIIL…TIHH), 166-186 (WANL…IVSS), 193-213 (FYSY…LLMI), and 219-239 (GVSD…ASRV). Residues 100-211 (LGRLAFCLVP…NFTVALFVLL (112 aa)) form the Ferric oxidoreductase domain. In terms of domain architecture, FAD-binding FR-type spans 240-368 (YNGYSVPGLT…GIPLYEYFDN (129 aa)).

Belongs to the ferric reductase (FRE) family. AIM14 subfamily.

Its subcellular location is the membrane. Functionally, probable cell surface metalloreductase. May be involved in iron or copper homeostasis. The protein is Probable metalloreductase AIM14 (AIM14) of Clavispora lusitaniae (strain ATCC 42720) (Yeast).